The chain runs to 610 residues: Synaptotagmin-like protein 3 (610 aa).

One can recognise a RabBD domain in the interval 4–123 (EIDLSALKEL…IKTGEWFYEE (120 aa)). The tract at residues 219–239 (RQCVGQTERRSQSDTAVNVTT) is disordered. 2 consecutive C2 domains span residues 306–428 (VTGE…TQSF) and 462–603 (RPRK…NLWT).

As to quaternary structure, monomer. Binds NRXN1. Binds RAB27A that has been activated by GTP-binding via its N-terminus.

The protein resides in the endomembrane system. Its function is as follows. May act as Rab effector protein and play a role in vesicle trafficking. Binds phospholipids in the presence of calcium ions. The polypeptide is Synaptotagmin-like protein 3 (SYTL3) (Homo sapiens (Human)).